Consider the following 343-residue polypeptide: Phosphatidylglycerol--prolipoprotein diacylglyceryl transferase 1 (343 aa).

A run of 4 helical transmembrane segments spans residues 19 to 39 (VPLR…VWLG), 54 to 74 (ADIA…YHVI), 93 to 113 (IWEG…GAWI), and 119 to 139 (GVPM…AQAI). Residue Arg141 coordinates a 1,2-diacyl-sn-glycero-3-phospho-(1'-sn-glycerol). The next 3 helical transmembrane spans lie at 176–196 (HPTF…VIWA), 202–224 (LGHG…WIEY), and 238–258 (LNNW…VLSA). The tract at residues 269 to 343 (EPGAETAAGD…TNGADSAKKG (75 aa)) is disordered. The span at 283 to 293 (ADKDVKGTKDA) shows a compositional bias: basic and acidic residues. A compositionally biased stretch (acidic residues) spans 314-324 (APEDTSGADEA).

Belongs to the Lgt family.

Its subcellular location is the cell membrane. The enzyme catalyses L-cysteinyl-[prolipoprotein] + a 1,2-diacyl-sn-glycero-3-phospho-(1'-sn-glycerol) = an S-1,2-diacyl-sn-glyceryl-L-cysteinyl-[prolipoprotein] + sn-glycerol 1-phosphate + H(+). The protein operates within protein modification; lipoprotein biosynthesis (diacylglyceryl transfer). Catalyzes the transfer of the diacylglyceryl group from phosphatidylglycerol to the sulfhydryl group of the N-terminal cysteine of a prolipoprotein, the first step in the formation of mature lipoproteins. The sequence is that of Phosphatidylglycerol--prolipoprotein diacylglyceryl transferase 1 from Streptomyces coelicolor (strain ATCC BAA-471 / A3(2) / M145).